The following is a 255-amino-acid chain: 5-oxoprolinase subunit A (255 aa).

Belongs to the LamB/PxpA family. Forms a complex composed of PxpA, PxpB and PxpC.

It catalyses the reaction 5-oxo-L-proline + ATP + 2 H2O = L-glutamate + ADP + phosphate + H(+). In terms of biological role, catalyzes the cleavage of 5-oxoproline to form L-glutamate coupled to the hydrolysis of ATP to ADP and inorganic phosphate. This chain is 5-oxoprolinase subunit A, found in Thermococcus sibiricus (strain DSM 12597 / MM 739).